The sequence spans 406 residues: NIPA-like protein 3 (406 aa).

4 helical membrane passes run 33-53, 76-96, 101-121, and 135-155; these read NLIG…ALNL, WWLG…SYAF, LIVP…IIFI, and VLSF…VTFA. Asn-166 carries an N-linked (GlcNAc...) asparagine glycan. 5 helical membrane-spanning segments follow: residues 171–191, 202–222, 240–260, 271–291, and 300–320; these read LVSW…CLLL, IVVI…TVKA, PIFY…AAFL, LIAS…GAIF, and VLHI…VFLI. Ser-372 bears the Phosphoserine mark.

Belongs to the NIPA family.

The protein resides in the membrane. This is NIPA-like protein 3 (NIPAL3) from Homo sapiens (Human).